We begin with the raw amino-acid sequence, 874 residues long: Leucine--tRNA ligase (874 aa).

The short motif at 43–53 (PYPSGRIHIGH) is the 'HIGH' region element. The interval 614–634 (LDDGSPVTVGPPEKMSKSKKN) is disordered. Positions 627-631 (KMSKS) match the 'KMSKS' region motif. Residue Lys-630 coordinates ATP.

Belongs to the class-I aminoacyl-tRNA synthetase family.

Its subcellular location is the cytoplasm. It catalyses the reaction tRNA(Leu) + L-leucine + ATP = L-leucyl-tRNA(Leu) + AMP + diphosphate. The polypeptide is Leucine--tRNA ligase (Azorhizobium caulinodans (strain ATCC 43989 / DSM 5975 / JCM 20966 / LMG 6465 / NBRC 14845 / NCIMB 13405 / ORS 571)).